Here is a 242-residue protein sequence, read N- to C-terminus: Phosphoribosylaminoimidazole-succinocarboxamide synthase (242 aa).

It belongs to the SAICAR synthetase family.

It catalyses the reaction 5-amino-1-(5-phospho-D-ribosyl)imidazole-4-carboxylate + L-aspartate + ATP = (2S)-2-[5-amino-1-(5-phospho-beta-D-ribosyl)imidazole-4-carboxamido]succinate + ADP + phosphate + 2 H(+). Its pathway is purine metabolism; IMP biosynthesis via de novo pathway; 5-amino-1-(5-phospho-D-ribosyl)imidazole-4-carboxamide from 5-amino-1-(5-phospho-D-ribosyl)imidazole-4-carboxylate: step 1/2. This is Phosphoribosylaminoimidazole-succinocarboxamide synthase from Prochlorococcus marinus (strain MIT 9303).